The following is a 732-amino-acid chain: Prolyl endopeptidase-like (732 aa).

Catalysis depends on charge relay system residues Ser-575, Asp-661, and His-707.

This sequence belongs to the peptidase S9A family. As to quaternary structure, homodimer.

The protein resides in the cytoplasm. The protein localises to the cytosol. In terms of biological role, serine peptidase whose precise substrate specificity remains unclear. Does not cleave peptides after a arginine or lysine residue. Regulates trans-Golgi network morphology and sorting by regulating the membrane binding of the AP-1 complex. May play a role in the regulation of synaptic vesicle exocytosis. The chain is Prolyl endopeptidase-like (PREPL) from Gallus gallus (Chicken).